Reading from the N-terminus, the 261-residue chain is Putative outer membrane protein CT_371 (261 aa).

A signal peptide spans 1-18; the sequence is MRLCFILFLLLSPLISEA.

The protein localises to the cell outer membrane. This chain is Putative outer membrane protein CT_371, found in Chlamydia trachomatis serovar D (strain ATCC VR-885 / DSM 19411 / UW-3/Cx).